The chain runs to 99 residues: MVKHSRGNRTRSRKLLKKSPRERGAVPSLGRLMLDLKEGERVVIKINSSTHSGMPHRRYQGKVGTILGKRGKSYEVKVKLGDKEKILIVRPEHLNQIKA.

Residues 1–18 (MVKHSRGNRTRSRKLLKK) are compositionally biased toward basic residues. The interval 1–26 (MVKHSRGNRTRSRKLLKKSPRERGAV) is disordered.

The protein belongs to the eukaryotic ribosomal protein eL21 family.

The chain is Large ribosomal subunit protein eL21 from Metallosphaera sedula (strain ATCC 51363 / DSM 5348 / JCM 9185 / NBRC 15509 / TH2).